A 109-amino-acid chain; its full sequence is Hainantoxin-XVIII-7 (109 aa).

Residues 1–18 (MKLSIIIIATSLVIAVVA) form the signal peptide. Positions 19-46 (FPSKDSKAIENDKTEQRMEIVVQETARA) are excised as a propeptide. Cystine bridges form between cysteine 47–cysteine 62, cysteine 55–cysteine 68, cysteine 59–cysteine 108, and cysteine 61–cysteine 81.

This sequence belongs to the neurotoxin 25 family. F7 subfamily. Expressed by the venom gland.

It localises to the secreted. Putative ion channel inhibitor. In Cyriopagopus hainanus (Chinese bird spider), this protein is Hainantoxin-XVIII-7.